The sequence spans 63 residues: ATP synthase F(0) complex subunit 8 (63 aa).

A helical membrane pass occupies residues threonine 8–leucine 24. Lysine 57 is subject to N6-acetyllysine.

It belongs to the ATPase protein 8 family. Component of the ATP synthase complex composed at least of ATP5F1A/subunit alpha, ATP5F1B/subunit beta, ATP5MC1/subunit c (homooctomer), MT-ATP6/subunit a, MT-ATP8/subunit 8, ATP5ME/subunit e, ATP5MF/subunit f, ATP5MG/subunit g, ATP5MK/subunit k, ATP5MJ/subunit j, ATP5F1C/subunit gamma, ATP5F1D/subunit delta, ATP5F1E/subunit epsilon, ATP5PF/subunit F6, ATP5PB/subunit b, ATP5PD/subunit d, ATP5PO/subunit OSCP. ATP synthase complex consists of a soluble F(1) head domain (subunits alpha(3) and beta(3)) - the catalytic core - and a membrane F(0) domain - the membrane proton channel (subunits c, a, 8, e, f, g, k and j). These two domains are linked by a central stalk (subunits gamma, delta, and epsilon) rotating inside the F1 region and a stationary peripheral stalk (subunits F6, b, d, and OSCP). Interacts with PRICKLE3.

It localises to the mitochondrion membrane. Its function is as follows. Subunit 8, of the mitochondrial membrane ATP synthase complex (F(1)F(0) ATP synthase or Complex V) that produces ATP from ADP in the presence of a proton gradient across the membrane which is generated by electron transport complexes of the respiratory chain. ATP synthase complex consist of a soluble F(1) head domain - the catalytic core - and a membrane F(1) domain - the membrane proton channel. These two domains are linked by a central stalk rotating inside the F(1) region and a stationary peripheral stalk. During catalysis, ATP synthesis in the catalytic domain of F(1) is coupled via a rotary mechanism of the central stalk subunits to proton translocation. In vivo, can only synthesize ATP although its ATP hydrolase activity can be activated artificially in vitro. Part of the complex F(0) domain. This is ATP synthase F(0) complex subunit 8 from Physeter macrocephalus (Sperm whale).